The primary structure comprises 142 residues: MAKEFSRTRRIAQQLQQELAQVLQRDMKDPRIGFVTVNDVDVSRDLSYAKVYVTFFEEDEKLVEQKVAALDAAAGYIRSLVAGRMKLRVMPELRFIYDSSLVEGMRMSNLVSRVISNDEAKQKQHGVETDAEQGETKDEGDK.

The tract at residues 119–142 (EAKQKQHGVETDAEQGETKDEGDK) is disordered.

This sequence belongs to the RbfA family. Monomer. Binds 30S ribosomal subunits, but not 50S ribosomal subunits or 70S ribosomes.

It is found in the cytoplasm. Its function is as follows. One of several proteins that assist in the late maturation steps of the functional core of the 30S ribosomal subunit. Associates with free 30S ribosomal subunits (but not with 30S subunits that are part of 70S ribosomes or polysomes). Required for efficient processing of 16S rRNA. May interact with the 5'-terminal helix region of 16S rRNA. The protein is Ribosome-binding factor A of Shewanella halifaxensis (strain HAW-EB4).